The primary structure comprises 127 residues: Aspartate 1-decarboxylase (127 aa).

Serine 25 serves as the catalytic Schiff-base intermediate with substrate; via pyruvic acid. A Pyruvic acid (Ser) modification is found at serine 25. Threonine 57 serves as a coordination point for substrate. The Proton donor role is filled by tyrosine 58. Residue 73–75 (GAA) participates in substrate binding.

Belongs to the PanD family. As to quaternary structure, heterooctamer of four alpha and four beta subunits. The cofactor is pyruvate. Is synthesized initially as an inactive proenzyme, which is activated by self-cleavage at a specific serine bond to produce a beta-subunit with a hydroxyl group at its C-terminus and an alpha-subunit with a pyruvoyl group at its N-terminus.

Its subcellular location is the cytoplasm. The enzyme catalyses L-aspartate + H(+) = beta-alanine + CO2. The protein operates within cofactor biosynthesis; (R)-pantothenate biosynthesis; beta-alanine from L-aspartate: step 1/1. Functionally, catalyzes the pyruvoyl-dependent decarboxylation of aspartate to produce beta-alanine. The polypeptide is Aspartate 1-decarboxylase (Shouchella clausii (strain KSM-K16) (Alkalihalobacillus clausii)).